A 452-amino-acid chain; its full sequence is MNSGILQVFQRELICPICMNYFIDPVTIDCGHSFCRPCFYLNWQDMAVLAQCSKCKKTTRQRNLKTNICLKNMASIARKASLRQFLSSEEQICGTHRETKEMFCEVDKSLLCLLCSNSQEHRNHRHCPTEWAAEERREELLRKMQSLWRKMCENHRNLNMATNRIRCWKDYVSLRIEAIRAEYHKMVAFFHEEEQRHLERLQKEGEDIFQQLNESKARMEHSRELLRGMYEDLRQMCHKAVVELFQSFGDILQRYESLLLQVSEPVNPEFSAGPIIGLMDRLKGFRVYLTLQHARASSHIFLHGDLRSMKVGCDPQHDPNITDKSECFLQWGADFFISGKFYWEFNMGHSWNWAFGVCNNYWKEKRQNDMIDGEVGLFLLGCVKEDTHCSLFTTSPLVMQYVPRPTDTVGLFLDCEGRTVSFVDVDRSSLIYTIPNCSFSPPLWPIICCSHF.

The segment at Cys-15–Lys-56 adopts an RING-type zinc-finger fold. The segment at Ser-88–Thr-129 adopts a B box-type zinc-finger fold. Zn(2+) contacts are provided by Cys-93, His-96, Cys-115, and His-121. A B30.2/SPRY domain is found at Glu-269–Phe-452.

This sequence belongs to the TRIM/RBCC family.

This chain is Tripartite motif-containing protein 51G, found in Homo sapiens (Human).